Here is a 167-residue protein sequence, read N- to C-terminus: Peptide deformylase (167 aa).

Residues Cys-91 and His-133 each contribute to the Fe cation site. The active site involves Glu-134. His-137 provides a ligand contact to Fe cation.

The protein belongs to the polypeptide deformylase family. It depends on Fe(2+) as a cofactor.

It carries out the reaction N-terminal N-formyl-L-methionyl-[peptide] + H2O = N-terminal L-methionyl-[peptide] + formate. Functionally, removes the formyl group from the N-terminal Met of newly synthesized proteins. Requires at least a dipeptide for an efficient rate of reaction. N-terminal L-methionine is a prerequisite for activity but the enzyme has broad specificity at other positions. The protein is Peptide deformylase of Buchnera aphidicola subsp. Schizaphis graminum (strain Sg).